A 356-amino-acid chain; its full sequence is UDP-N-acetylglucosamine--N-acetylmuramyl-(pentapeptide) pyrophosphoryl-undecaprenol N-acetylglucosamine transferase (356 aa).

Residues 14–16 (TGG), N126, R162, S190, I244, and Q289 contribute to the UDP-N-acetyl-alpha-D-glucosamine site.

It belongs to the glycosyltransferase 28 family. MurG subfamily.

The protein resides in the cell inner membrane. The enzyme catalyses di-trans,octa-cis-undecaprenyl diphospho-N-acetyl-alpha-D-muramoyl-L-alanyl-D-glutamyl-meso-2,6-diaminopimeloyl-D-alanyl-D-alanine + UDP-N-acetyl-alpha-D-glucosamine = di-trans,octa-cis-undecaprenyl diphospho-[N-acetyl-alpha-D-glucosaminyl-(1-&gt;4)]-N-acetyl-alpha-D-muramoyl-L-alanyl-D-glutamyl-meso-2,6-diaminopimeloyl-D-alanyl-D-alanine + UDP + H(+). It functions in the pathway cell wall biogenesis; peptidoglycan biosynthesis. Cell wall formation. Catalyzes the transfer of a GlcNAc subunit on undecaprenyl-pyrophosphoryl-MurNAc-pentapeptide (lipid intermediate I) to form undecaprenyl-pyrophosphoryl-MurNAc-(pentapeptide)GlcNAc (lipid intermediate II). The sequence is that of UDP-N-acetylglucosamine--N-acetylmuramyl-(pentapeptide) pyrophosphoryl-undecaprenol N-acetylglucosamine transferase from Cupriavidus pinatubonensis (strain JMP 134 / LMG 1197) (Cupriavidus necator (strain JMP 134)).